The sequence spans 495 residues: Probable cytosol aminopeptidase (495 aa).

Mn(2+)-binding residues include lysine 266 and aspartate 271. The active site involves lysine 278. The Mn(2+) site is built by aspartate 289, aspartate 348, and glutamate 350. Residue arginine 352 is part of the active site.

This sequence belongs to the peptidase M17 family. It depends on Mn(2+) as a cofactor.

It is found in the cytoplasm. It carries out the reaction Release of an N-terminal amino acid, Xaa-|-Yaa-, in which Xaa is preferably Leu, but may be other amino acids including Pro although not Arg or Lys, and Yaa may be Pro. Amino acid amides and methyl esters are also readily hydrolyzed, but rates on arylamides are exceedingly low.. The enzyme catalyses Release of an N-terminal amino acid, preferentially leucine, but not glutamic or aspartic acids.. Its function is as follows. Presumably involved in the processing and regular turnover of intracellular proteins. Catalyzes the removal of unsubstituted N-terminal amino acids from various peptides. This chain is Probable cytosol aminopeptidase, found in Pseudomonas aeruginosa (strain UCBPP-PA14).